The chain runs to 610 residues: Glucoamylase ARB_02327-1 (610 aa).

Positions 1–18 are cleaved as a signal peptide; that stretch reads MRVTSLLWSSLVIPAAVG. The propeptide occupies 19-24; that stretch reads FQVRFK. Asparagine 49 carries an N-linked (GlcNAc...) asparagine glycan. Tryptophan 143 lines the substrate pocket. The N-linked (GlcNAc...) asparagine glycan is linked to asparagine 194. The active-site Proton acceptor is the aspartate 199. Catalysis depends on glutamate 202, which acts as the Proton donor. Cystine bridges form between cysteine 233/cysteine 236, cysteine 245/cysteine 472, and cysteine 285/cysteine 293. One can recognise a CBM20 domain in the interval 504-610; it reads TALPTKNNVR…SGAIKRDTWR (107 aa).

This sequence belongs to the glycosyl hydrolase 15 family.

Its subcellular location is the secreted. The catalysed reaction is Hydrolysis of terminal (1-&gt;4)-linked alpha-D-glucose residues successively from non-reducing ends of the chains with release of beta-D-glucose.. The sequence is that of Glucoamylase ARB_02327-1 from Arthroderma benhamiae (strain ATCC MYA-4681 / CBS 112371) (Trichophyton mentagrophytes).